Reading from the N-terminus, the 379-residue chain is Succinyl-diaminopimelate desuccinylase (379 aa).

His-70 is a Zn(2+) binding site. Asp-72 is an active-site residue. Zn(2+) is bound at residue Asp-103. Glu-137 functions as the Proton acceptor in the catalytic mechanism. Residues Glu-138, Glu-166, and His-352 each coordinate Zn(2+).

Belongs to the peptidase M20A family. DapE subfamily. As to quaternary structure, homodimer. The cofactor is Zn(2+). Co(2+) serves as cofactor.

The enzyme catalyses N-succinyl-(2S,6S)-2,6-diaminopimelate + H2O = (2S,6S)-2,6-diaminopimelate + succinate. It participates in amino-acid biosynthesis; L-lysine biosynthesis via DAP pathway; LL-2,6-diaminopimelate from (S)-tetrahydrodipicolinate (succinylase route): step 3/3. Its function is as follows. Catalyzes the hydrolysis of N-succinyl-L,L-diaminopimelic acid (SDAP), forming succinate and LL-2,6-diaminopimelate (DAP), an intermediate involved in the bacterial biosynthesis of lysine and meso-diaminopimelic acid, an essential component of bacterial cell walls. This chain is Succinyl-diaminopimelate desuccinylase, found in Burkholderia cenocepacia (strain ATCC BAA-245 / DSM 16553 / LMG 16656 / NCTC 13227 / J2315 / CF5610) (Burkholderia cepacia (strain J2315)).